The chain runs to 594 residues: 3-hydroxy-3-methylglutaryl coenzyme A reductase 2-A (594 aa).

The disordered stretch occupies residues 1-32; that stretch reads MDVRRRPVKSLSSAKTATAGEPPKSQQQHPKA. The Lumenal segment spans residues 1–37; sequence MDVRRRPVKSLSSAKTATAGEPPKSQQQHPKASDALP. The helical transmembrane segment at 38–58 threads the bilayer; sequence LPLYLTNGLFFTMFFSVMYFL. At 59–81 the chain is on the cytoplasmic side; that stretch reads LHRWREKIRNSTPLHVVTLSELA. The chain crosses the membrane as a helical span at residues 82–102; that stretch reads ALVLLMASVIYLLGFFGIGFV. At 103-549 the chain is on the lumenal side; sequence RSVIRPSPDA…SKESPGSNSR (447 aa). A glycan (N-linked (GlcNAc...) asparagine) is linked at asparagine 261. The active-site Charge relay system is the glutamate 273. The N-linked (GlcNAc...) asparagine glycan is linked to asparagine 337. Residues lysine 405 and aspartate 481 each act as charge relay system in the active site. The chain crosses the membrane as a helical span at residues 550–570; sequence LLASIVAGSVLAGELSLMSAL. Residues 571-594 lie on the Cytoplasmic side of the membrane; it reads AAGQLVKSHMKYNRSSKDITKLSS. The active-site Proton donor is the histidine 579.

Belongs to the HMG-CoA reductase family. As to expression, mostly expressed in the petioles of seedlings, seedlings and roots, and, to a lower extent, in seeds, leaves, stems and flowers.

The protein localises to the endoplasmic reticulum membrane. It localises to the plastid. The protein resides in the chloroplast membrane. It is found in the peroxisome membrane. It catalyses the reaction (R)-mevalonate + 2 NADP(+) + CoA = (3S)-3-hydroxy-3-methylglutaryl-CoA + 2 NADPH + 2 H(+). Its pathway is metabolic intermediate biosynthesis; (R)-mevalonate biosynthesis; (R)-mevalonate from acetyl-CoA: step 3/3. With respect to regulation, competitive inhibition by mevinolin (Mev) is leading to a significant reduction of total ginsenoside in adventitious roots. Triggered by darkness. Catalyzes the synthesis of mevalonate, the specific precursor of all isoprenoid compounds present in plants. Component of the triterpene saponins (e.g. ginsenosides or panaxosides) and phytosterols biosynthetic pathways. This is 3-hydroxy-3-methylglutaryl coenzyme A reductase 2-A from Panax ginseng (Korean ginseng).